The chain runs to 112 residues: uncharacterized protein (112 aa).

One can recognise an HIT domain in the interval 5–112 (IFQKIIKGII…LLGGKKLNKI (108 aa)). A Histidine triad motif motif is present at residues 98-102 (HLHLH).

This is an uncharacterized protein from Buchnera aphidicola subsp. Baizongia pistaciae (strain Bp).